The chain runs to 457 residues: UDP-glycosyltransferase 708C1 (457 aa).

Residue G31 participates in UDP-alpha-D-glucose binding. The active-site Proton acceptor is H32. H32 is a binding site for an anthocyanidin. A UDP-alpha-D-glucose-binding site is contributed by T34. N94 is an an anthocyanidin binding site. The active-site Charge relay is the D129. T150 contacts UDP-alpha-D-glucose. A UDP region spans residues 279-280 (NR). UDP-alpha-D-glucose-binding residues include V341, Q343, H358, W361, N362, S363, and E366. An anthocyanidin is bound at residue G381. Positions 382 and 383 each coordinate UDP-alpha-D-glucose.

It belongs to the UDP-glycosyltransferase family. As to expression, expressed in cotyledons. Not detected in flowers, leaves, roots and hypocotyls.

It catalyses the reaction a 3'-hydro-2'-hydroxy-beta-oxodihydrochalcone + UDP-alpha-D-glucose = a 3'-(beta-D-glucopyranosyl)-2'-hydroxy-beta-oxodihydrochalcone + UDP + H(+). In terms of biological role, UDP-glucose-dependent glucosyltransferase catalyzing the C-glucosylation of 2-hydroxyflavanones (2-hydroxynaringenin, 2-hydroxyeriodictyol and 2-hydroxypinocembrin) and phloretin. No activity with flavanones, flavones or flavonols. Exhibits C-glycosylation activity toward 2',4',6'-trihydroxyacetophenone and phloretin using UDP-glucose as sugar donor. Can use UDP-galactose as sugar donor, but catalytic efficiency is 14-fold lower toward UDP-galactose than toward UDP-glucose. The polypeptide is UDP-glycosyltransferase 708C1 (Fagopyrum esculentum (Common buckwheat)).